Here is a 412-residue protein sequence, read N- to C-terminus: Tyrosine--tRNA ligase (412 aa).

Tyr31 is a binding site for L-tyrosine. Residues 36–45 carry the 'HIGH' region motif; it reads PTAPSLHIGH. Tyr162 and Gln166 together coordinate L-tyrosine. A 'KMSKS' region motif is present at residues 222–226; sequence KIGKT. Lys225 contacts ATP. Residues 345-411 form the S4 RNA-binding domain; that stretch reads KRWLDIVVEL…GKRKKQVIDL (67 aa).

Belongs to the class-I aminoacyl-tRNA synthetase family. TyrS type 1 subfamily. In terms of assembly, homodimer.

The protein resides in the cytoplasm. It carries out the reaction tRNA(Tyr) + L-tyrosine + ATP = L-tyrosyl-tRNA(Tyr) + AMP + diphosphate + H(+). Functionally, catalyzes the attachment of tyrosine to tRNA(Tyr) in a two-step reaction: tyrosine is first activated by ATP to form Tyr-AMP and then transferred to the acceptor end of tRNA(Tyr). In Chlamydia trachomatis serovar L2 (strain ATCC VR-902B / DSM 19102 / 434/Bu), this protein is Tyrosine--tRNA ligase.